The following is a 378-amino-acid chain: Cytochrome b (378 aa).

Transmembrane regions (helical) follow at residues 33 to 53 (FGSL…FLAM), 77 to 98 (WMIR…FLHT), 113 to 133 (WNIG…GYVL), and 178 to 198 (FFTF…IHLL). Heme b is bound by residues His-83 and His-97. The heme b site is built by His-182 and His-196. A ubiquinone is bound at residue His-201. 4 helical membrane passes run 226–246 (TKDI…TLFT), 288–308 (LGGV…PATH), 320–340 (ITQI…WIGG), and 347–366 (FEAI…TLIP).

Belongs to the cytochrome b family. The cytochrome bc1 complex contains 11 subunits: 3 respiratory subunits (MT-CYB, CYC1 and UQCRFS1), 2 core proteins (UQCRC1 and UQCRC2) and 6 low-molecular weight proteins (UQCRH/QCR6, UQCRB/QCR7, UQCRQ/QCR8, UQCR10/QCR9, UQCR11/QCR10 and a cleavage product of UQCRFS1). This cytochrome bc1 complex then forms a dimer. It depends on heme b as a cofactor.

Its subcellular location is the mitochondrion inner membrane. Its function is as follows. Component of the ubiquinol-cytochrome c reductase complex (complex III or cytochrome b-c1 complex) that is part of the mitochondrial respiratory chain. The b-c1 complex mediates electron transfer from ubiquinol to cytochrome c. Contributes to the generation of a proton gradient across the mitochondrial membrane that is then used for ATP synthesis. The sequence is that of Cytochrome b (MT-CYB) from Cebus albifrons (White-fronted capuchin).